An 882-amino-acid chain; its full sequence is DNA replication helicase (882 aa).

The segment at 1–29 (MAAAGGERQLDGQKPGPPHLQQPGDRPAV) is disordered. 97–104 (GNAGSGKS) contacts ATP.

This sequence belongs to the herpesviridae helicase family. In terms of assembly, associates with the primase and the primase-associated factor to form the helicase-primase complex.

The protein localises to the host nucleus. In terms of biological role, component of the helicase/primase complex. Unwinds the DNA at the replication forks and generates single-stranded DNA for both leading and lagging strand synthesis. The primase synthesizes short RNA primers on the lagging strand that the polymerase elongates using dNTPs. Possesses helicase-like motifs and therefore may act as the helicase subunit of the complex. This chain is DNA replication helicase, found in Homo sapiens (Human).